A 122-amino-acid chain; its full sequence is Large ribosomal subunit protein uL14 (122 aa).

This sequence belongs to the universal ribosomal protein uL14 family. Part of the 50S ribosomal subunit. Forms a cluster with proteins L3 and L19. In the 70S ribosome, L14 and L19 interact and together make contacts with the 16S rRNA in bridges B5 and B8.

Binds to 23S rRNA. Forms part of two intersubunit bridges in the 70S ribosome. The sequence is that of Large ribosomal subunit protein uL14 from Cyanothece sp. (strain PCC 7425 / ATCC 29141).